Reading from the N-terminus, the 180-residue chain is Large ribosomal subunit protein uL5 (180 aa).

The protein belongs to the universal ribosomal protein uL5 family. As to quaternary structure, part of the 50S ribosomal subunit; part of the 5S rRNA/L5/L18/L25 subcomplex. Contacts the 5S rRNA and the P site tRNA. Forms a bridge to the 30S subunit in the 70S ribosome.

Its function is as follows. This is one of the proteins that bind and probably mediate the attachment of the 5S RNA into the large ribosomal subunit, where it forms part of the central protuberance. In the 70S ribosome it contacts protein S13 of the 30S subunit (bridge B1b), connecting the 2 subunits; this bridge is implicated in subunit movement. Contacts the P site tRNA; the 5S rRNA and some of its associated proteins might help stabilize positioning of ribosome-bound tRNAs. The sequence is that of Large ribosomal subunit protein uL5 from Polynucleobacter necessarius subsp. necessarius (strain STIR1).